A 200-amino-acid chain; its full sequence is Holliday junction branch migration complex subunit RuvA (200 aa).

Positions 1–64 are domain I; that stretch reads MIGHLRGIIV…EDAHTLYGFH (64 aa). A domain II region spans residues 65 to 143; that stretch reads NDHERRLFRA…RWHTNDTPSP (79 aa). The interval 133-152 is disordered; that stretch reads SRWHTNDTPSPEGLRSSNTQ. The flexible linker stretch occupies residues 144 to 148; the sequence is EGLRS. The domain III stretch occupies residues 149–200; that stretch reads SNTQPTQDAISALMALGYKPQEAKRAIDAIQKPDLSAETLIRLALKQMVLGT.

This sequence belongs to the RuvA family. Homotetramer. Forms an RuvA(8)-RuvB(12)-Holliday junction (HJ) complex. HJ DNA is sandwiched between 2 RuvA tetramers; dsDNA enters through RuvA and exits via RuvB. An RuvB hexamer assembles on each DNA strand where it exits the tetramer. Each RuvB hexamer is contacted by two RuvA subunits (via domain III) on 2 adjacent RuvB subunits; this complex drives branch migration. In the full resolvosome a probable DNA-RuvA(4)-RuvB(12)-RuvC(2) complex forms which resolves the HJ.

The protein localises to the cytoplasm. Its function is as follows. The RuvA-RuvB-RuvC complex processes Holliday junction (HJ) DNA during genetic recombination and DNA repair, while the RuvA-RuvB complex plays an important role in the rescue of blocked DNA replication forks via replication fork reversal (RFR). RuvA specifically binds to HJ cruciform DNA, conferring on it an open structure. The RuvB hexamer acts as an ATP-dependent pump, pulling dsDNA into and through the RuvAB complex. HJ branch migration allows RuvC to scan DNA until it finds its consensus sequence, where it cleaves and resolves the cruciform DNA. This chain is Holliday junction branch migration complex subunit RuvA, found in Coxiella burnetii (strain CbuK_Q154) (Coxiella burnetii (strain Q154)).